Consider the following 359-residue polypeptide: Ras association domain-containing protein 7 (359 aa).

A Ras-associating domain is found at 6 to 89 (VAMELKVWVD…VQFVLRRTGP (84 aa)). The segment at 87–123 (TGPSLSGRPSSDNCPPPERCPVRASLPPKPSAIPGRE) is disordered. A compositionally biased stretch (polar residues) spans 89–99 (PSLSGRPSSDN). Coiled coils occupy residues 180–208 (WEQE…TAEH) and 242–301 (AAER…QQFI). Residues 339–359 (SHILVSSLSPEVPPMRQSSWR) form a disordered region.

Interacts with MAP2K7 and GTP-bound NRAS. Polyubiquitinated and degraded by the proteasome upon prolonged stress stimuli.

It localises to the cytoplasm. Its subcellular location is the cytoskeleton. It is found in the microtubule organizing center. The protein localises to the centrosome. In terms of biological role, negatively regulates stress-induced JNK activation and apoptosis by promoting MAP2K7 phosphorylation and inhibiting its ability to activate JNK. Following prolonged stress, anti-apoptotic effect stops because of degradation of RASSF7 protein via the ubiquitin-proteasome pathway. Required for the activation of AURKB and chromosomal congression during mitosis where it stimulates microtubule polymerization. The protein is Ras association domain-containing protein 7 (Rassf7) of Mus musculus (Mouse).